A 123-amino-acid polypeptide reads, in one-letter code: Transmembrane protein 049L (123 aa).

Transmembrane regions (helical) follow at residues 67–87 and 104–121; these read VFGALCVAFGIMLIGFLLWLV and LSLQQMVFLITTCIGVYN.

The protein resides in the membrane. This is Transmembrane protein 049L from Acheta domesticus (House cricket).